Here is a 396-residue protein sequence, read N- to C-terminus: UPF0046 protein T07D4.2 (396 aa).

A disordered region spans residues 73–94 (SRRGSIASGIPMDKKTRRKLSN).

It belongs to the UPF0046 family.

This chain is UPF0046 protein T07D4.2, found in Caenorhabditis elegans.